A 347-amino-acid polypeptide reads, in one-letter code: NADH-ubiquinone oxidoreductase chain 2 (347 aa).

The next 11 membrane-spanning stretches (helical) occupy residues 1–21 (MNPM…SIVM), 25–45 (HWFL…PVLM), 60–80 (FLTQ…NLMF), 96–116 (MLLT…FWVP), 127–147 (GLIL…QIYP), 149–169 (INTN…GWGG), 178–198 (IMAY…IYNP), 202–222 (LLNL…LIFA), 239–259 (IITI…PLTG), 274–294 (NSVI…FFYM), and 326–346 (MMPL…FILL).

This sequence belongs to the complex I subunit 2 family. In terms of assembly, core subunit of respiratory chain NADH dehydrogenase (Complex I) which is composed of 45 different subunits. Interacts with TMEM242.

It localises to the mitochondrion inner membrane. It carries out the reaction a ubiquinone + NADH + 5 H(+)(in) = a ubiquinol + NAD(+) + 4 H(+)(out). Its function is as follows. Core subunit of the mitochondrial membrane respiratory chain NADH dehydrogenase (Complex I) that is believed to belong to the minimal assembly required for catalysis. Complex I functions in the transfer of electrons from NADH to the respiratory chain. The immediate electron acceptor for the enzyme is believed to be ubiquinone. The sequence is that of NADH-ubiquinone oxidoreductase chain 2 from Suncus etruscus (Etruscan shrew).